Reading from the N-terminus, the 46-residue chain is uncharacterized protein (46 aa).

A helical membrane pass occupies residues 20–42 (MAMIWVVAALVIALVVGTALNYI).

It is found in the membrane. This is an uncharacterized protein from Bacillus subtilis (strain 168).